Consider the following 62-residue polypeptide: MVQTRSCDYCGDDIEPGTGTMFVHNDGSTVHFCSAKCEKNADLGREPRDVEWTDEEEVEETQ.

Cys-7, Cys-10, Cys-33, and Cys-37 together coordinate Zn(2+). The C4-type zinc-finger motif lies at 7-37 (CDYCGDDIEPGTGTMFVHNDGSTVHFCSAKC).

This sequence belongs to the eukaryotic ribosomal protein eL24 family. As to quaternary structure, part of the 50S ribosomal subunit. Forms a cluster with proteins L3 and L14. Zn(2+) is required as a cofactor.

Binds to the 23S rRNA. This is Large ribosomal subunit protein eL24 from Halobacterium salinarum (strain ATCC 29341 / DSM 671 / R1).